The primary structure comprises 276 residues: MRNIAFLIGLFFIGYSSCVLHATPTRASLVEKSDAESTHVEQWDSNGKRTLQADDRERILAEERGMEQTLLPAAEAIGKTKVSEKAVSRASLGSKLNPMTWPKRILYKIKLWYARFRQNLLKRATMDEESIDRSMMSGLTPFALKKIKNDIFHYSSSVPRDAIKIEKDYNSYVDQFFGQFNGLFKDPPVFEMAKWKKLEADMTSTEQIVERTALNKVSQYIDKGFSNEKLISLDVSPFVYMRLLEKRGVFKDVENNIDKIEHLKVYVKAYEEHLMV.

A signal peptide spans 1-18 (MRNIAFLIGLFFIGYSSC). The short motif at 49-64 (RTLQADDRERILAEER) is the RxLR-dEER element.

It belongs to the RxLR effector family.

It is found in the secreted. Its subcellular location is the host nucleus. The protein resides in the host cytoplasm. Its function is as follows. Secreted effector that partially suppresses the host cell death induced by cell death-inducing proteins. The sequence is that of Secreted RxLR effector protein 150 from Plasmopara viticola (Downy mildew of grapevine).